We begin with the raw amino-acid sequence, 94 residues long: Co-chaperonin GroES (94 aa).

It belongs to the GroES chaperonin family. In terms of assembly, heptamer of 7 subunits arranged in a ring. Interacts with the chaperonin GroEL.

Its subcellular location is the cytoplasm. Together with the chaperonin GroEL, plays an essential role in assisting protein folding. The GroEL-GroES system forms a nano-cage that allows encapsulation of the non-native substrate proteins and provides a physical environment optimized to promote and accelerate protein folding. GroES binds to the apical surface of the GroEL ring, thereby capping the opening of the GroEL channel. This chain is Co-chaperonin GroES, found in Bacillus mycoides (strain KBAB4) (Bacillus weihenstephanensis).